The sequence spans 944 residues: Putative ATP-dependent RNA helicase (944 aa).

A Helicase ATP-binding domain is found at 66–235 (TTPRSPIDGI…VPLHNLLMKL (170 aa)). Position 79-86 (79-86 (HGVGTGKT)) interacts with ATP. A DEAH box motif is present at residues 183–186 (DEAH). The region spanning 451-523 (CLTREVMTVP…QIIGRGIRYQ (73 aa)) is the Helicase C-terminal domain.

This sequence belongs to the DEAD box helicase family. DEAH subfamily.

The catalysed reaction is ATP + H2O = ADP + phosphate + H(+). In Heliothis virescens ascovirus 3e (HvAV-3e), this protein is Putative ATP-dependent RNA helicase.